A 161-amino-acid polypeptide reads, in one-letter code: 3-isopropylmalate dehydratase small subunit (161 aa).

This sequence belongs to the LeuD family. LeuD type 2 subfamily. In terms of assembly, heterodimer of LeuC and LeuD.

The enzyme catalyses (2R,3S)-3-isopropylmalate = (2S)-2-isopropylmalate. The protein operates within amino-acid biosynthesis; L-leucine biosynthesis; L-leucine from 3-methyl-2-oxobutanoate: step 2/4. Its function is as follows. Catalyzes the isomerization between 2-isopropylmalate and 3-isopropylmalate, via the formation of 2-isopropylmaleate. The polypeptide is 3-isopropylmalate dehydratase small subunit (Metallosphaera sedula (strain ATCC 51363 / DSM 5348 / JCM 9185 / NBRC 15509 / TH2)).